Reading from the N-terminus, the 416-residue chain is Gamma-glutamyl phosphate reductase (416 aa).

The protein belongs to the gamma-glutamyl phosphate reductase family.

Its subcellular location is the cytoplasm. The catalysed reaction is L-glutamate 5-semialdehyde + phosphate + NADP(+) = L-glutamyl 5-phosphate + NADPH + H(+). It participates in amino-acid biosynthesis; L-proline biosynthesis; L-glutamate 5-semialdehyde from L-glutamate: step 2/2. Functionally, catalyzes the NADPH-dependent reduction of L-glutamate 5-phosphate into L-glutamate 5-semialdehyde and phosphate. The product spontaneously undergoes cyclization to form 1-pyrroline-5-carboxylate. This is Gamma-glutamyl phosphate reductase from Streptococcus pyogenes serotype M6 (strain ATCC BAA-946 / MGAS10394).